The sequence spans 291 residues: Small ribosomal subunit protein uS3 (291 aa).

The region spanning 39 to 110 (IRLEIMKFLK…KISIKIKEVK (72 aa)) is the KH type-2 domain.

This sequence belongs to the universal ribosomal protein uS3 family. As to quaternary structure, part of the 30S ribosomal subunit. Forms a tight complex with proteins S10 and S14.

Functionally, binds the lower part of the 30S subunit head. Binds mRNA in the 70S ribosome, positioning it for translation. This is Small ribosomal subunit protein uS3 from Borreliella afzelii (strain PKo) (Borrelia afzelii).